A 228-amino-acid polypeptide reads, in one-letter code: 2-C-methyl-D-erythritol 4-phosphate cytidylyltransferase (228 aa).

This sequence belongs to the IspD/TarI cytidylyltransferase family. IspD subfamily.

It carries out the reaction 2-C-methyl-D-erythritol 4-phosphate + CTP + H(+) = 4-CDP-2-C-methyl-D-erythritol + diphosphate. The protein operates within isoprenoid biosynthesis; isopentenyl diphosphate biosynthesis via DXP pathway; isopentenyl diphosphate from 1-deoxy-D-xylulose 5-phosphate: step 2/6. Functionally, catalyzes the formation of 4-diphosphocytidyl-2-C-methyl-D-erythritol from CTP and 2-C-methyl-D-erythritol 4-phosphate (MEP). In Mannheimia succiniciproducens (strain KCTC 0769BP / MBEL55E), this protein is 2-C-methyl-D-erythritol 4-phosphate cytidylyltransferase.